A 253-amino-acid chain; its full sequence is Geranylgeranylglyceryl phosphate synthase (253 aa).

2 residues coordinate Mg(2+): aspartate 28 and serine 53. Residues 172–178 (YLEAGSG), 203–204 (GG), and 225–226 (GN) contribute to the sn-glycerol 1-phosphate site.

It belongs to the GGGP/HepGP synthase family. Group II subfamily. Mg(2+) serves as cofactor.

The protein localises to the cytoplasm. It carries out the reaction sn-glycerol 1-phosphate + (2E,6E,10E)-geranylgeranyl diphosphate = sn-3-O-(geranylgeranyl)glycerol 1-phosphate + diphosphate. It functions in the pathway membrane lipid metabolism; glycerophospholipid metabolism. Prenyltransferase that catalyzes the transfer of the geranylgeranyl moiety of geranylgeranyl diphosphate (GGPP) to the C3 hydroxyl of sn-glycerol-1-phosphate (G1P). This reaction is the first ether-bond-formation step in the biosynthesis of archaeal membrane lipids. This chain is Geranylgeranylglyceryl phosphate synthase, found in Methanocaldococcus jannaschii (strain ATCC 43067 / DSM 2661 / JAL-1 / JCM 10045 / NBRC 100440) (Methanococcus jannaschii).